The primary structure comprises 102 residues: Small ribosomal subunit protein uS10 (102 aa).

It belongs to the universal ribosomal protein uS10 family. As to quaternary structure, part of the 30S ribosomal subunit.

In terms of biological role, involved in the binding of tRNA to the ribosomes. The chain is Small ribosomal subunit protein uS10 from Latilactobacillus sakei subsp. sakei (strain 23K) (Lactobacillus sakei subsp. sakei).